Consider the following 453-residue polypeptide: Methylenetetrahydrofolate--tRNA-(uracil-5-)-methyltransferase TrmFO (453 aa).

Residue 10-15 (GGGLAG) participates in FAD binding. The tract at residues 433 to 453 (ELAPWIDSAPPTAVPAAPAAG) is disordered. A compositionally biased stretch (low complexity) spans 441-453 (APPTAVPAAPAAG).

The protein belongs to the MnmG family. TrmFO subfamily. Requires FAD as cofactor.

It is found in the cytoplasm. The enzyme catalyses uridine(54) in tRNA + (6R)-5,10-methylene-5,6,7,8-tetrahydrofolate + NADH + H(+) = 5-methyluridine(54) in tRNA + (6S)-5,6,7,8-tetrahydrofolate + NAD(+). It catalyses the reaction uridine(54) in tRNA + (6R)-5,10-methylene-5,6,7,8-tetrahydrofolate + NADPH + H(+) = 5-methyluridine(54) in tRNA + (6S)-5,6,7,8-tetrahydrofolate + NADP(+). In terms of biological role, catalyzes the folate-dependent formation of 5-methyl-uridine at position 54 (M-5-U54) in all tRNAs. The sequence is that of Methylenetetrahydrofolate--tRNA-(uracil-5-)-methyltransferase TrmFO from Anaeromyxobacter dehalogenans (strain 2CP-1 / ATCC BAA-258).